The following is a 241-amino-acid chain: Proteasome subunit alpha (241 aa).

It belongs to the peptidase T1A family. In terms of assembly, the 20S proteasome core is composed of 14 alpha and 14 beta subunits that assemble into four stacked heptameric rings, resulting in a barrel-shaped structure. The two inner rings, each composed of seven catalytic beta subunits, are sandwiched by two outer rings, each composed of seven alpha subunits. The catalytic chamber with the active sites is on the inside of the barrel. Has a gated structure, the ends of the cylinder being occluded by the N-termini of the alpha-subunits. Is capped by the proteasome-associated ATPase, ARC.

It is found in the cytoplasm. Its pathway is protein degradation; proteasomal Pup-dependent pathway. With respect to regulation, the formation of the proteasomal ATPase ARC-20S proteasome complex, likely via the docking of the C-termini of ARC into the intersubunit pockets in the alpha-rings, may trigger opening of the gate for substrate entry. Interconversion between the open-gate and close-gate conformations leads to a dynamic regulation of the 20S proteasome proteolysis activity. Functionally, component of the proteasome core, a large protease complex with broad specificity involved in protein degradation. The polypeptide is Proteasome subunit alpha (Parafrankia sp. (strain EAN1pec)).